The following is a 137-amino-acid chain: Small ribosomal subunit protein uS12 (137 aa).

Residue aspartate 102 is modified to 3-methylthioaspartic acid.

The protein belongs to the universal ribosomal protein uS12 family. In terms of assembly, part of the 30S ribosomal subunit. Contacts proteins S8 and S17. May interact with IF1 in the 30S initiation complex.

Its function is as follows. With S4 and S5 plays an important role in translational accuracy. In terms of biological role, interacts with and stabilizes bases of the 16S rRNA that are involved in tRNA selection in the A site and with the mRNA backbone. Located at the interface of the 30S and 50S subunits, it traverses the body of the 30S subunit contacting proteins on the other side and probably holding the rRNA structure together. The combined cluster of proteins S8, S12 and S17 appears to hold together the shoulder and platform of the 30S subunit. The protein is Small ribosomal subunit protein uS12 of Mycoplasmopsis agalactiae (strain NCTC 10123 / CIP 59.7 / PG2) (Mycoplasma agalactiae).